The sequence spans 99 residues: PE family protein PE13 (99 aa).

Residues 1-93 form the PE domain; sequence MSFVMAYPEM…ASSYAATEVA (93 aa).

The protein belongs to the mycobacterial PE family.

It is found in the secreted. Its subcellular location is the cell wall. May play a pivotal role in the interaction between M.tuberculosis and host. Can enhance the survival within macrophages under stress conditions such as H(2)O(2), SDS and low pH. Increases the production of IL-6 and IL-1beta from macrophages, and decreases the secretion of suppressor of cytokine signaling 3 (SOCS-3). These changes probably involve the p38-ERK-NF-kappa-B signaling pathway. Also precipitates the macrophage death. The protein is PE family protein PE13 of Mycobacterium tuberculosis (strain ATCC 25618 / H37Rv).